Reading from the N-terminus, the 95-residue chain is Parvalbumin alpha (95 aa).

S19 bears the Phosphoserine mark. EF-hand domains are found at residues K34–D69 and L73–A95. 10 residues coordinate Ca(2+): D47, D49, S51, F53, E55, E58, D86, D88, D90, and K92.

This sequence belongs to the parvalbumin family.

Its function is as follows. In muscle, parvalbumin is thought to be involved in relaxation after contraction. It binds two calcium ions. This is Parvalbumin alpha (PVALB) from Cavia porcellus (Guinea pig).